A 503-amino-acid polypeptide reads, in one-letter code: Glycoprotein 3-alpha-L-fucosyltransferase A (503 aa).

Topologically, residues 1–10 are cytoplasmic; the sequence is MRRPKISLKK. The chain crosses the membrane as a helical; Signal-anchor for type II membrane protein span at residues 11 to 28; sequence YFYLTLICALLLIFGFSL. Over 29 to 503 the chain is Lumenal; sequence KEREIWKTLS…KDVISDSSDD (475 aa). The segment at 44–71 is disordered; sequence ITTQQQQHQHLHQLQSMDEEHPMATSST. Positions 47–58 are enriched in low complexity; that stretch reads QQQQHQHLHQLQ. N-linked (GlcNAc...) asparagine glycosylation is found at Asn-262, Asn-295, and Asn-299.

It belongs to the glycosyltransferase 10 family. It depends on Mn(2+) as a cofactor.

It localises to the golgi apparatus. The protein resides in the golgi stack membrane. The enzyme catalyses N(4)-{beta-D-GlcNAc-(1-&gt;2)-alpha-D-Man-(1-&gt;3)-[beta-D-GlcNAc-(1-&gt;2)-alpha-D-Man-(1-&gt;6)]-beta-D-Man-(1-&gt;4)-beta-D-GlcNAc-(1-&gt;4)-beta-D-GlcNAc}-L-asparaginyl-[protein] + GDP-beta-L-fucose = N(4)-{beta-D-GlcNAc-(1-&gt;2)-alpha-D-Man-(1-&gt;3)-[beta-D-GlcNAc-(1-&gt;2)-alpha-D-Man-(1-&gt;6)]-beta-D-Man-(1-&gt;4)-beta-D-GlcNAc-(1-&gt;4)-[alpha-L-Fuc(1-&gt;3)]-beta-D-GlcNAc}-L-asparaginyl-[protein] + GDP + H(+). Its pathway is protein modification; protein glycosylation. In terms of biological role, catalyzes alpha-1,3 glycosidic linkages of N-glycans. Plays a role in neuronal development by promoting ventral nerve cord formation, possibly by promoting interactions between migrating cells and the extracellular matrix or by promoting neural activity. The polypeptide is Glycoprotein 3-alpha-L-fucosyltransferase A (FucTA) (Drosophila melanogaster (Fruit fly)).